Consider the following 443-residue polypeptide: Chromosomal replication initiator protein DnaA (443 aa).

Positions 1-67 (MDAWSRSLER…RELLAHFAGF (67 aa)) are domain I, interacts with DnaA modulators. The segment at 67-105 (FSDVFLEIGSRPRPVEAQNAPFSTPSAHVSSEPQVPFAG) is domain II. Positions 106 to 323 (NLDNHYTFAN…GALNTLTARA (218 aa)) are domain III, AAA+ region. ATP contacts are provided by G151, G153, K154, and T155. Residues 324 to 443 (NFTGRAITTE…WDKLIRKLSE (120 aa)) are domain IV, binds dsDNA.

Belongs to the DnaA family. Oligomerizes as a right-handed, spiral filament on DNA at oriC.

The protein resides in the cytoplasm. Its function is as follows. Plays an essential role in the initiation and regulation of chromosomal replication. ATP-DnaA binds to the origin of replication (oriC) to initiate formation of the DNA replication initiation complex once per cell cycle. Binds the DnaA box (a 9 base pair repeat at the origin) and separates the double-stranded (ds)DNA. Forms a right-handed helical filament on oriC DNA; dsDNA binds to the exterior of the filament while single-stranded (ss)DNA is stabiized in the filament's interior. The ATP-DnaA-oriC complex binds and stabilizes one strand of the AT-rich DNA unwinding element (DUE), permitting loading of DNA polymerase. After initiation quickly degrades to an ADP-DnaA complex that is not apt for DNA replication. Binds acidic phospholipids. This Stenotrophomonas maltophilia (strain R551-3) protein is Chromosomal replication initiator protein DnaA.